A 1036-amino-acid chain; its full sequence is Cysteine-rich motor neuron 1 protein (1036 aa).

An N-terminal signal peptide occupies residues 1-34 (MYLVAGDRGLAGCGHLLVSLLGLLLLLARSGTRA). Residues 35-112 (LVCLPCDESK…EYEAGVCEDE (78 aa)) enclose the IGFBP N-terminal domain. The Extracellular segment spans residues 35–939 (LVCLPCDESK…HPSEDSSLDS (905 aa)). Cystine bridges form between cysteine 37–cysteine 60, cysteine 40–cysteine 62, cysteine 45–cysteine 63, and cysteine 51–cysteine 66. N-linked (GlcNAc...) asparagine glycosylation is present at asparagine 71. Intrachain disulfides connect cysteine 74/cysteine 90 and cysteine 84/cysteine 109. Asparagine 113 is a glycosylation site (N-linked (GlcNAc...) asparagine). A Cell attachment site motif is present at residues 314-316 (RGD). N-linked (GlcNAc...) asparagine glycosylation is present at asparagine 330. VWFC domains are found at residues 334-391 (PACV…PVCE) and 401-457 (AGCY…PVCE). Antistasin-like domains lie at 469–498 (CGEL…TCQC), 505–532 (CSER…ICEC), 539–564 (CRPI…ICRC), and 567–592 (CPEL…ICKC). N-linked (GlcNAc...) asparagine glycosylation occurs at asparagine 474. VWFC domains follow at residues 606–663 (GTCL…PSCA) and 677–735 (SICH…PQCT). The N-linked (GlcNAc...) asparagine glycan is linked to asparagine 746. VWFC domains lie at 751 to 809 (NYCK…PYCI) and 817 to 874 (VVCH…PMCP). The helical transmembrane segment at 940-960 (IASVVVPIIICLSIIIAFLFI) threads the bilayer. The Cytoplasmic portion of the chain corresponds to 961–1036 (NQKKQWIPLL…LQADNFYQTV (76 aa)). Threonine 1035 carries the post-translational modification Phosphothreonine.

Interacts with BMP4 and BMP7. Post-translationally, N-glycosylated. In terms of tissue distribution, expressed in pancreas, kidney, skeletal muscle, lung, placenta, brain, heart, spleen, liver and small intestine. Expressed in blood vessels (at protein level).

Its subcellular location is the secreted. The protein resides in the cell membrane. May play a role in CNS development by interacting with growth factors implicated in motor neuron differentiation and survival. May play a role in capillary formation and maintenance during angiogenesis. Modulates BMP activity by affecting its processing and delivery to the cell surface. The chain is Cysteine-rich motor neuron 1 protein (CRIM1) from Homo sapiens (Human).